We begin with the raw amino-acid sequence, 402 residues long: Argininosuccinate synthase (402 aa).

Residues 11 to 19 and A39 contribute to the ATP site; that span reads AYSGGLDTS. Y90 and S95 together coordinate L-citrulline. G120 is a binding site for ATP. T122, N126, and D127 together coordinate L-aspartate. N126 contacts L-citrulline. Positions 130, 179, 188, 264, and 276 each coordinate L-citrulline.

It belongs to the argininosuccinate synthase family. Type 1 subfamily. As to quaternary structure, homotetramer.

Its subcellular location is the cytoplasm. The enzyme catalyses L-citrulline + L-aspartate + ATP = 2-(N(omega)-L-arginino)succinate + AMP + diphosphate + H(+). It participates in amino-acid biosynthesis; L-arginine biosynthesis; L-arginine from L-ornithine and carbamoyl phosphate: step 2/3. This chain is Argininosuccinate synthase, found in Roseiflexus castenholzii (strain DSM 13941 / HLO8).